The primary structure comprises 126 residues: Protein HEAT-INDUCED TAS1 TARGET 3 (126 aa).

This sequence belongs to the heat induced plant HTT protein family. In terms of tissue distribution, expressed in seedlings, leaves, stems, inflorescences and siliques.

It localises to the cytoplasm. It is found in the nucleus. In terms of biological role, mediates both basal and acquired thermotolerance. The polypeptide is Protein HEAT-INDUCED TAS1 TARGET 3 (Arabidopsis thaliana (Mouse-ear cress)).